Here is a 33-residue protein sequence, read N- to C-terminus: Dermaseptin-H6 (33 aa).

The residue at position 33 (L33) is a Leucine amide.

In terms of tissue distribution, expressed by the skin glands.

The protein localises to the secreted. Has antimicrobial activity. This chain is Dermaseptin-H6, found in Pithecopus hypochondrialis (Orange-legged leaf frog).